An 88-amino-acid polypeptide reads, in one-letter code: Small ribosomal subunit protein bS18 (88 aa).

Residues 1 to 11 show a composition bias toward low complexity; that stretch reads MTTANTTAKDN. The interval 1–21 is disordered; that stretch reads MTTANTTAKDNAATKKRGRKA.

The protein belongs to the bacterial ribosomal protein bS18 family. In terms of assembly, part of the 30S ribosomal subunit. Forms a tight heterodimer with protein bS6.

Functionally, binds as a heterodimer with protein bS6 to the central domain of the 16S rRNA, where it helps stabilize the platform of the 30S subunit. The protein is Small ribosomal subunit protein bS18 of Thermoanaerobacter pseudethanolicus (strain ATCC 33223 / 39E) (Clostridium thermohydrosulfuricum).